Reading from the N-terminus, the 355-residue chain is 3-dehydroquinate synthase (355 aa).

NAD(+) is bound by residues 69–74 (DGEQHK), 103–107 (GVIGD), 127–128 (TT), K140, K149, and 167–170 (TLQT). Residues E182, H245, and H262 each coordinate Zn(2+).

Belongs to the sugar phosphate cyclases superfamily. Dehydroquinate synthase family. Co(2+) serves as cofactor. Zn(2+) is required as a cofactor. It depends on NAD(+) as a cofactor.

It is found in the cytoplasm. The catalysed reaction is 7-phospho-2-dehydro-3-deoxy-D-arabino-heptonate = 3-dehydroquinate + phosphate. It functions in the pathway metabolic intermediate biosynthesis; chorismate biosynthesis; chorismate from D-erythrose 4-phosphate and phosphoenolpyruvate: step 2/7. Its function is as follows. Catalyzes the conversion of 3-deoxy-D-arabino-heptulosonate 7-phosphate (DAHP) to dehydroquinate (DHQ). The chain is 3-dehydroquinate synthase from Pseudoalteromonas atlantica (strain T6c / ATCC BAA-1087).